The following is a 437-amino-acid chain: O-methyltransferase elcB (437 aa).

Residue Asp-269 coordinates S-adenosyl-L-methionine. The active-site Proton acceptor is the His-319.

Belongs to the class I-like SAM-binding methyltransferase superfamily. Cation-independent O-methyltransferase family. COMT subfamily.

Its pathway is secondary metabolite biosynthesis. O-methyltransferase; part of the gene cluster that mediates the biosynthesis of elsinochrome C, a perelyenequinone phytotoxin structurally similar to cercosporin. The first step of elsinochrome C biosynthesis is performed by the polyketide synthase elcA which catalyzes the formation of nor-toralactone. The starter unit acyltransferase (SAT) domain of elcA initiates polyketide extension by the selective utilization of acetyl-CoA, which is elongated to the heptaketide in the beta-ketoacyl synthase (KS) domain by successive condensations with six malonyl units introduced by the malonyl acyltransferase (MAT) domain. The product template (PT) domain catalyzes C4-C9 and C2-C11 aldol cyclizations and dehydrations to a trihydroxynaphthalene, which is thought to be delivered to the thioesterase (TE) domain for product release. The bifunctional enzyme elcB then methylates nor-toralactone to toralactone before conducting an unusual oxidative aromatic ring opening. The next step in perylenequinone biosynthesis is an O-methylation at the nascent OH-6 of the elcB product performed by the O-methyltransferase elcD. The oxidative coupling of the two monomeric naphthol units in perylenequinone biosynthesis is catalyzed by the FAD-dependent monooxygenase elcE and the multicopper oxidase elcG. ElcG might catalyze the first intermolecular coupling in a regio- and stereo-selective manner via a phenol radical coupling mechanism and the elcE could forge the second C-C bond intramolecularly via a hydride transfer mechanism. The fasciclin domain-containing protein elcF might also play a role duting this step. The last piece of the puzzle in the biosynthesis of elsinochrome C is the additional annulation by enolate coupling to afford the dihydrobenzo(ghi)perylenequinone system, catalyzed by the FAD-dependent monooxygenase elcH. The protein is O-methyltransferase elcB of Phaeosphaeria nodorum (strain SN15 / ATCC MYA-4574 / FGSC 10173) (Glume blotch fungus).